The sequence spans 144 residues: Benzoylsuccinyl-CoA thiolase subunit BbsA (144 aa).

Residues Cys-40, Cys-43, Cys-54, and Cys-57 each coordinate Zn(2+).

Belongs to the BbsA family. In terms of assembly, heterotetramer composed of two BbsA subunits and two BbsB subunits. BbsA forms homodimeric subcomplexes. Both BbsA and BbsB are essential for enzymatic activity.

It catalyses the reaction (S)-2-benzoylsuccinyl-CoA + CoA = benzoyl-CoA + succinyl-CoA. Its pathway is xenobiotic degradation; toluene degradation. In terms of biological role, component of the BbsAB thiolase complex, which catalyzes the thiolytic cleavage of (S)-2-benzoylsuccinyl-CoA to succinyl-CoA and benzoyl-CoA, the final step of anaerobic toluene metabolism. The BbsA subunit critically contributes to an induced-fit process for productive binding of a CoA substrate into the active site of BbsB. The sequence is that of Benzoylsuccinyl-CoA thiolase subunit BbsA from Thauera aromatica.